We begin with the raw amino-acid sequence, 396 residues long: Acetate kinase (396 aa).

Asparagine 7 contributes to the Mg(2+) binding site. Lysine 14 is an ATP binding site. Substrate is bound at residue arginine 86. The active-site Proton donor/acceptor is the aspartate 143. Residues 203–207, 277–279, and 325–329 each bind ATP; these read HLGNG, DMR, and GIGEH. Glutamate 380 contributes to the Mg(2+) binding site.

This sequence belongs to the acetokinase family. In terms of assembly, homodimer. The cofactor is Mg(2+). It depends on Mn(2+) as a cofactor.

It localises to the cytoplasm. The enzyme catalyses acetate + ATP = acetyl phosphate + ADP. It participates in metabolic intermediate biosynthesis; acetyl-CoA biosynthesis; acetyl-CoA from acetate: step 1/2. Catalyzes the formation of acetyl phosphate from acetate and ATP. Can also catalyze the reverse reaction. In Sulfurovum sp. (strain NBC37-1), this protein is Acetate kinase.